A 140-amino-acid polypeptide reads, in one-letter code: Large ribosomal subunit protein bL17 (140 aa).

This sequence belongs to the bacterial ribosomal protein bL17 family. Part of the 50S ribosomal subunit. Contacts protein L32.

The sequence is that of Large ribosomal subunit protein bL17 from Ruegeria pomeroyi (strain ATCC 700808 / DSM 15171 / DSS-3) (Silicibacter pomeroyi).